The chain runs to 361 residues: Ferredoxin--NADP reductase 1 (361 aa).

Residues Asp44, Gln52, Tyr57, Ala97, Phe142, Asp308, and Ser349 each coordinate FAD.

It belongs to the ferredoxin--NADP reductase type 2 family. As to quaternary structure, homodimer. Requires FAD as cofactor.

It catalyses the reaction 2 reduced [2Fe-2S]-[ferredoxin] + NADP(+) + H(+) = 2 oxidized [2Fe-2S]-[ferredoxin] + NADPH. This is Ferredoxin--NADP reductase 1 from Cupriavidus necator (strain ATCC 17699 / DSM 428 / KCTC 22496 / NCIMB 10442 / H16 / Stanier 337) (Ralstonia eutropha).